A 254-amino-acid polypeptide reads, in one-letter code: D-aminoacyl-tRNA deacylase (254 aa).

This sequence belongs to the DtdA deacylase family. In terms of assembly, monomer. Zn(2+) serves as cofactor.

It catalyses the reaction a D-aminoacyl-tRNA + H2O = a tRNA + a D-alpha-amino acid + H(+). The catalysed reaction is glycyl-tRNA(Ala) + H2O = tRNA(Ala) + glycine + H(+). In terms of biological role, D-aminoacyl-tRNA deacylase with broad substrate specificity. By recycling D-aminoacyl-tRNA to D-amino acids and free tRNA molecules, this enzyme counteracts the toxicity associated with the formation of D-aminoacyl-tRNA entities in vivo. In Methanococcus vannielii (strain ATCC 35089 / DSM 1224 / JCM 13029 / OCM 148 / SB), this protein is D-aminoacyl-tRNA deacylase.